The chain runs to 361 residues: Cdc42 effector protein 1 (361 aa).

Residues 1–29 (MPGPQGAGGAPAMNLGKLSPVGWVSSSQG) are disordered. Residues serine 19 and serine 27 each carry the phosphoserine modification. Threonine 34 is subject to Phosphothreonine. One can recognise a CRIB domain in the interval 38 to 52 (ISPPLGDFRHTMHVG). Position 39 is a phosphoserine (serine 39). Arginine 53 carries the omega-N-methylarginine modification. A phosphoserine mark is found at serine 65, serine 73, serine 77, serine 101, serine 113, serine 121, serine 139, serine 180, serine 190, serine 192, and serine 195. A disordered region spans residues 161–186 (CTISRLPRPEKPRDRDRDSSFPAEPE). Residues 167–186 (PRPEKPRDRDRDSSFPAEPE) show a composition bias toward basic and acidic residues. Disordered stretches follow at residues 218 to 300 (EGSA…SRHH) and 320 to 361 (SWGS…EVKV). Tandem repeats lie at residues 220 to 226 (SAAETPA), 229 to 235 (PAASPPA), 236 to 242 (SVANPPA), and 243 to 249 (PASSPSL). Positions 220 to 249 (SAAETPAPAPAASPPASVANPPAPASSPSL) are 4 X 7 AA tandem repeats of [PT]-[AT]-A-[ENT]-[PT]-[PTS]-[AG]. 3 positions are modified to phosphoserine: serine 270, serine 320, and serine 323. Over residues 332-347 (QAGSRTPVPSTVQANT) the composition is skewed to polar residues. Residues 351–361 (ADAEEDDEVKV) are compositionally biased toward acidic residues.

The protein belongs to the BORG/CEP family. Interacts with RHOQ and CDC42, in a GTP-dependent manner.

It is found in the endomembrane system. It localises to the cytoplasm. The protein localises to the cytoskeleton. Probably involved in the organization of the actin cytoskeleton. Induced membrane extensions in fibroblasts. In Bos taurus (Bovine), this protein is Cdc42 effector protein 1.